Reading from the N-terminus, the 239-residue chain is Probable transcriptional regulatory protein EF_2866 (239 aa).

Belongs to the TACO1 family. YeeN subfamily.

It localises to the cytoplasm. The protein is Probable transcriptional regulatory protein EF_2866 of Enterococcus faecalis (strain ATCC 700802 / V583).